Here is a 203-residue protein sequence, read N- to C-terminus: uncharacterized protein (203 aa).

This is an uncharacterized protein from Chlorobium limicola.